The chain runs to 160 residues: Cytochrome b6-f complex subunit 4 (160 aa).

The next 3 membrane-spanning stretches (helical) occupy residues 36 to 56 (LLYI…GLAV), 95 to 115 (LLGV…PFLE), and 131 to 151 (TVFL…TLPI).

Belongs to the cytochrome b family. PetD subfamily. The 4 large subunits of the cytochrome b6-f complex are cytochrome b6, subunit IV (17 kDa polypeptide, petD), cytochrome f and the Rieske protein, while the 4 small subunits are petG, petL, petM and petN. The complex functions as a dimer.

It localises to the plastid. It is found in the chloroplast thylakoid membrane. In terms of biological role, component of the cytochrome b6-f complex, which mediates electron transfer between photosystem II (PSII) and photosystem I (PSI), cyclic electron flow around PSI, and state transitions. This Pisum sativum (Garden pea) protein is Cytochrome b6-f complex subunit 4.